The sequence spans 122 residues: Large ribosomal subunit protein uL14 (122 aa).

The protein belongs to the universal ribosomal protein uL14 family. As to quaternary structure, part of the 50S ribosomal subunit. Forms a cluster with proteins L3 and L19. In the 70S ribosome, L14 and L19 interact and together make contacts with the 16S rRNA in bridges B5 and B8.

Binds to 23S rRNA. Forms part of two intersubunit bridges in the 70S ribosome. This chain is Large ribosomal subunit protein uL14, found in Malacoplasma penetrans (strain HF-2) (Mycoplasma penetrans).